Reading from the N-terminus, the 365-residue chain is Putative glutamate--cysteine ligase 2-3 (365 aa).

The protein belongs to the glutamate--cysteine ligase type 2 family. YbdK subfamily.

It catalyses the reaction L-cysteine + L-glutamate + ATP = gamma-L-glutamyl-L-cysteine + ADP + phosphate + H(+). In terms of biological role, ATP-dependent carboxylate-amine ligase which exhibits weak glutamate--cysteine ligase activity. This is Putative glutamate--cysteine ligase 2-3 from Mycolicibacterium smegmatis (strain ATCC 700084 / mc(2)155) (Mycobacterium smegmatis).